Here is a 328-residue protein sequence, read N- to C-terminus: Cytochrome c biogenesis protein CcsA (328 aa).

The next 8 membrane-spanning stretches (helical) occupy residues 13 to 33 (ISFSVVSIVMTIYFLTLLVNL), 46 to 66 (GIIITFFSITGFLFTRWIFSG), 73 to 93 (LYESLIFLSWAFSIIHMISFF), 101 to 121 (LNAITAPSAIFIQGFATSGLL), 146 to 166 (MVLGYGALLCGSLLSIALLVI), 234 to 254 (IISLGFLFLTIGILSGAVWAN), 263 to 283 (WDPKETWAFITWTIFAIYLHI), and 295 to 315 (AIVASIGFLVIWICYFGVNLL).

This sequence belongs to the CcmF/CycK/Ccl1/NrfE/CcsA family. May interact with Ccs1.

It is found in the plastid. The protein resides in the chloroplast thylakoid membrane. Required during biogenesis of c-type cytochromes (cytochrome c6 and cytochrome f) at the step of heme attachment. The sequence is that of Cytochrome c biogenesis protein CcsA from Aethionema grandiflorum (Persian stone-cress).